Reading from the N-terminus, the 400-residue chain is Small ribosomal subunit protein bS1 (400 aa).

S1 motif domains follow at residues 17–87, 107–173, 194–262, and 279–348; these read GDVV…VTYL, EEVV…LSRR, GDVV…LSLK, and GDVV…LSIK. Basic and acidic residues predominate over residues 351 to 366; the sequence is EERPAQEEGQKEEKRA. The disordered stretch occupies residues 351–400; that stretch reads EERPAQEEGQKEEKRAARPRRPRRQEKRDFELPETQTGFSMADLFGDIEL.

It belongs to the bacterial ribosomal protein bS1 family. Phosphorylated.

Binds mRNA; thus facilitating recognition of the initiation point. It is needed to translate mRNA with a short Shine-Dalgarno (SD) purine-rich sequence. The chain is Small ribosomal subunit protein bS1 (rpsA) from Streptococcus pneumoniae (strain ATCC BAA-255 / R6).